The following is a 423-amino-acid chain: FAD-dependent monooxygenase asL6 (423 aa).

FAD-binding positions include 10–13 (AGVA), 34–35 (ER), Arg-108, Tyr-290, and Asp-312. A helical transmembrane segment spans residues 371 to 391 (GMGMFQSKFGVGVFYVLLAII).

The protein belongs to the aromatic-ring hydroxylase family. Requires FAD as cofactor.

Its subcellular location is the membrane. Its pathway is secondary metabolite biosynthesis; terpenoid biosynthesis. In terms of biological role, FAD-dependent monooxygenase; part of the gene cluster that mediates the biosynthesis of xenovulene A, an unusual meroterpenoid that has potent inhibitory effects on the human gamma-aminobutyrate A (GABAA) benzodiazepine receptor. The first step of xenovulene A biosynthesis is the biosynthesis of 3-methylorcinaldehyde performed by the non-reducing polyketide synthase aspks1. The salicylate hydroxylase asL1 then catalyzes the oxidative dearomatization of 3-methylorcinaldehyde to yield a dearomatized hydroxycyclohexadione. The 2-oxoglutarate-dependent dioxygenase asL3 further catalyzes the oxidative ring expansion to provide the first tropolone metabolite. The cytochrome P450 monooxygenase asR2 allows the synthesis of tropolone hemiacetal. In parallel, a previously unrecognised class of terpene cyclase, asR6, produces alpha-humulene from farnesylpyrophosphate (FPP). The putative Diels-Alderase asR5 probably catalyzes the formation of the tropolone-humulene skeleton by linking humulene and the polyketide moiety. Oxidative-ring contractions catalyzed by asL4 and asL6 then processively remove carbon atoms from the polyketide to yield xenovulene A. This chain is FAD-dependent monooxygenase asL6, found in Sarocladium schorii (Acremonium strictum (strain IMI 501407)).